The sequence spans 153 residues: Ribosomal RNA large subunit methyltransferase H (153 aa).

S-adenosyl-L-methionine-binding residues include leucine 71 and glycine 102.

Belongs to the RNA methyltransferase RlmH family. As to quaternary structure, homodimer.

The protein resides in the cytoplasm. The catalysed reaction is pseudouridine(1915) in 23S rRNA + S-adenosyl-L-methionine = N(3)-methylpseudouridine(1915) in 23S rRNA + S-adenosyl-L-homocysteine + H(+). In terms of biological role, specifically methylates the pseudouridine at position 1915 (m3Psi1915) in 23S rRNA. The chain is Ribosomal RNA large subunit methyltransferase H from Anaeromyxobacter dehalogenans (strain 2CP-1 / ATCC BAA-258).